The following is a 467-amino-acid chain: Chromosomal replication initiator protein DnaA (467 aa).

The interval 1–90 (MSLSLWQQCL…KPVTQTPQAA (90 aa)) is domain I, interacts with DnaA modulators. Positions 91–130 (VTSNVAAPAQVAQTQPQRAAPSTRSGWDNVPAPAEPTYRS) are domain II. The span at 98–111 (PAQVAQTQPQRAAP) shows a compositional bias: low complexity. The interval 98–119 (PAQVAQTQPQRAAPSTRSGWDN) is disordered. Residues 131-347 (NVNVKHTFDN…GALNRVIANA (217 aa)) are domain III, AAA+ region. 4 residues coordinate ATP: Gly175, Gly177, Lys178, and Thr179. Positions 348-467 (NFTGRAITID…FSNLIRTLSS (120 aa)) are domain IV, binds dsDNA.

This sequence belongs to the DnaA family. In terms of assembly, oligomerizes as a right-handed, spiral filament on DNA at oriC.

It localises to the cytoplasm. Its function is as follows. Plays an essential role in the initiation and regulation of chromosomal replication. ATP-DnaA binds to the origin of replication (oriC) to initiate formation of the DNA replication initiation complex once per cell cycle. Binds the DnaA box (a 9 base pair repeat at the origin) and separates the double-stranded (ds)DNA. Forms a right-handed helical filament on oriC DNA; dsDNA binds to the exterior of the filament while single-stranded (ss)DNA is stabiized in the filament's interior. The ATP-DnaA-oriC complex binds and stabilizes one strand of the AT-rich DNA unwinding element (DUE), permitting loading of DNA polymerase. After initiation quickly degrades to an ADP-DnaA complex that is not apt for DNA replication. Binds acidic phospholipids. This chain is Chromosomal replication initiator protein DnaA, found in Shigella sonnei (strain Ss046).